The chain runs to 172 residues: Putative phosphoesterase BAMEG_3349 (172 aa).

His34 functions as the Proton donor in the catalytic mechanism. 2 short sequence motifs (HXTX) span residues 34–37 and 115–118; these read HITL and HLTI. His115 functions as the Proton acceptor in the catalytic mechanism.

This sequence belongs to the 2H phosphoesterase superfamily. YjcG family.

This Bacillus anthracis (strain CDC 684 / NRRL 3495) protein is Putative phosphoesterase BAMEG_3349.